The chain runs to 25 residues: Bacteriocin mutacin F-59.1 (25 aa).

Cys-9 and Xaa-14 are disulfide-bonded.

The protein localises to the secreted. Its function is as follows. Bactericidal activity against a wide range of pathogenic bacteria, including Bacillus spp., Enterococcus spp., Listeria spp., Staphylococcus spp. and Streptococcus spp. Has no activity against Lactobacillus salivarius, Staphylococcus aureus, Streptococcus pyogenes and Streptococcus suis. This Streptococcus mutans protein is Bacteriocin mutacin F-59.1.